Reading from the N-terminus, the 395-residue chain is Tubulin-like protein CetZ1 (395 aa).

GTP contacts are provided by residues 10–14 (QAGGK), 110–112 (GTG), E142, N169, and N187.

This sequence belongs to the CetZ family.

It is found in the cytoplasm. Its function is as follows. Involved in cell shape control. Essential for the development of a rod-shaped cell type required for efficient swimming. The protein is Tubulin-like protein CetZ1 of Haloferax volcanii (strain ATCC 29605 / DSM 3757 / JCM 8879 / NBRC 14742 / NCIMB 2012 / VKM B-1768 / DS2) (Halobacterium volcanii).